Reading from the N-terminus, the 500-residue chain is Galactofuranose transporter ATP-binding protein YtfR (500 aa).

2 consecutive ABC transporter domains span residues 10-245 (LRTE…LGRE) and 259-497 (LSDK…IMNA). 42–49 (GENGAGKS) lines the ATP pocket.

The protein belongs to the ABC transporter superfamily. In terms of assembly, the complex is composed of two ATP-binding proteins (YtfR), two transmembrane proteins (YtfT and YjfF) and a solute-binding protein (YtfQ).

The protein resides in the cell inner membrane. It carries out the reaction D-galactofuranose(out) + ATP + H2O = D-galactofuranose(in) + ADP + phosphate + H(+). Part of the ABC transporter complex YtfQRT-YjfF involved in galactofuranose transport. Responsible for energy coupling to the transport system. This Escherichia coli (strain K12) protein is Galactofuranose transporter ATP-binding protein YtfR (ytfR).